A 414-amino-acid chain; its full sequence is Putative competence-damage inducible protein (414 aa).

This sequence belongs to the CinA family.

This chain is Putative competence-damage inducible protein, found in Listeria monocytogenes serovar 1/2a (strain ATCC BAA-679 / EGD-e).